Reading from the N-terminus, the 752-residue chain is MKRNGFVPSNSVGRRGIPSNSTSSAIASAGGAVVWTGAGAGRVRARPEQVSVGPGTMSCVTDPREEHRLIAEEIEEARWRYYVLDSPTIDDADFDRRMRRLEALEEEFPELRTPDSPTQTVGGAVSTDFTSHPHLRRMESLDNAFSVEEVEAWYARLRRDGVEDPALLCELKVDGLAINLLYEEGRLVRALTRGDGTTGEDVTSNVKTITSVPHRLTGTDEFPVPALVEVRGEVFLPVEAFERLNESLLEAGKAPFANPRNSAAGSLRQKDPRITASRALGMVCHGIGERRGFEPQAQSHAYDALAAWGLPTSDQVRVVSTLKGVEGYIENAGARRHTIVPYEIDGVVVKVDDVALQRRLGSTSRAPRWAIAFKYPPEEVNAKLLEIRVNVGRTGRVTPYAVMEPTKVAGSTVENATLHNFYEVERKDVRPGGPGDPGDTVILRKAGDVIPEILGPVLALRPEGLQPWVPPTTCPSCGTPLVEQKEGDKDRRCPNHEKCPGQLRERVFFVASRNAFDIEGLGYEAAVALLDAEVIANEGDVFDLDAAALLRAPLFTRAPKKDEDGPQLSANGQRLLDNLDKAKQVPLWRVLVALSIRHVGPKAGRALATEFGSMAAIRAATEEQLAAAEGVGPTIAEAVIEWFKEPWHVEIVDKWERAGVTMADERDESTPRTLAGLTVVVTGSLVDFSRDSAKEAILSRGGKAAGSVSKKTDYVVVGENAGSKADKAEQLGVPVLDEAGFKTLLDGGPAAL.

Positions 1 to 25 are disordered; the sequence is MKRNGFVPSNSVGRRGIPSNSTSSA. Residues 91–95, 140–141, and Glu-170 each bind NAD(+); these read DADFD and SL. Residue Lys-172 is the N6-AMP-lysine intermediate of the active site. The NAD(+) site is built by Arg-193, Glu-233, Lys-350, and Lys-374. 4 residues coordinate Zn(2+): Cys-474, Cys-477, Cys-493, and Cys-499. One can recognise a BRCT domain in the interval 669–752; the sequence is STPRTLAGLT…TLLDGGPAAL (84 aa).

Belongs to the NAD-dependent DNA ligase family. LigA subfamily. Mg(2+) serves as cofactor. The cofactor is Mn(2+).

The catalysed reaction is NAD(+) + (deoxyribonucleotide)n-3'-hydroxyl + 5'-phospho-(deoxyribonucleotide)m = (deoxyribonucleotide)n+m + AMP + beta-nicotinamide D-nucleotide.. DNA ligase that catalyzes the formation of phosphodiester linkages between 5'-phosphoryl and 3'-hydroxyl groups in double-stranded DNA using NAD as a coenzyme and as the energy source for the reaction. It is essential for DNA replication and repair of damaged DNA. The sequence is that of DNA ligase from Nocardioides sp. (strain ATCC BAA-499 / JS614).